Here is a 268-residue protein sequence, read N- to C-terminus: Zinc transporter ZupT (268 aa).

Helical transmembrane passes span 6–26 (LAFLLTLFAGLATGVGSLIAF), 37–57 (SFALGLSAGVMIYVSMVDIFF), 70–90 (TQGYWLTVIAFFGGMLLIGFI), 125–145 (GLFTALALAIHNFPEGIATFV), and 152–172 (SIGLAIAIAVAIHNIPEGIAV). Residues asparagine 136 and glutamate 139 each contribute to the Fe(2+) site. The Zn(2+) site is built by glutamate 139 and histidine 164. Fe(2+)-binding residues include asparagine 165, glutamate 168, and glutamate 197. Glutamate 168 is a Zn(2+) binding site. The next 2 helical transmembrane spans lie at 201 to 221 (AIVAILILMPFLNDLMFGIIF) and 248 to 268 (MSMYGVISGMALMAVSLLLLA).

It belongs to the ZIP transporter (TC 2.A.5) family. ZupT subfamily.

It is found in the cell membrane. The enzyme catalyses Zn(2+)(in) = Zn(2+)(out). Mediates zinc uptake. May also transport other divalent cations. The polypeptide is Zinc transporter ZupT (Oceanobacillus iheyensis (strain DSM 14371 / CIP 107618 / JCM 11309 / KCTC 3954 / HTE831)).